We begin with the raw amino-acid sequence, 361 residues long: tRNA 2-selenouridine synthase (361 aa).

Residues 11-134 (LIADTPLIDV…LRQTAIQATW (124 aa)) enclose the Rhodanese domain. Cysteine 94 functions as the S-selanylcysteine intermediate in the catalytic mechanism.

Belongs to the SelU family. Monomer.

The catalysed reaction is 5-methylaminomethyl-2-thiouridine(34) in tRNA + selenophosphate + (2E)-geranyl diphosphate + H2O + H(+) = 5-methylaminomethyl-2-selenouridine(34) in tRNA + (2E)-thiogeraniol + phosphate + diphosphate. It catalyses the reaction 5-methylaminomethyl-2-thiouridine(34) in tRNA + (2E)-geranyl diphosphate = 5-methylaminomethyl-S-(2E)-geranyl-thiouridine(34) in tRNA + diphosphate. The enzyme catalyses 5-methylaminomethyl-S-(2E)-geranyl-thiouridine(34) in tRNA + selenophosphate + H(+) = 5-methylaminomethyl-2-(Se-phospho)selenouridine(34) in tRNA + (2E)-thiogeraniol. It carries out the reaction 5-methylaminomethyl-2-(Se-phospho)selenouridine(34) in tRNA + H2O = 5-methylaminomethyl-2-selenouridine(34) in tRNA + phosphate. Functionally, involved in the post-transcriptional modification of the uridine at the wobble position (U34) of tRNA(Lys), tRNA(Glu) and tRNA(Gln). Catalyzes the conversion of 2-thiouridine (S2U-RNA) to 2-selenouridine (Se2U-RNA). Acts in a two-step process involving geranylation of 2-thiouridine (S2U) to S-geranyl-2-thiouridine (geS2U) and subsequent selenation of the latter derivative to 2-selenouridine (Se2U) in the tRNA chain. This is tRNA 2-selenouridine synthase from Salmonella arizonae (strain ATCC BAA-731 / CDC346-86 / RSK2980).